Reading from the N-terminus, the 72-residue chain is Heat-stable enterotoxin A3/A4 (72 aa).

Positions 1-19 (MKKSILFIFLSVLSFSPFA) are cleaved as a signal peptide. Residues 20–53 (QDAKPVESSKEKITLESKKCNIAKKSNKSGPESM) constitute a propeptide that is removed on maturation. Cystine bridges form between Cys59–Cys64, Cys60–Cys68, and Cys63–Cys71.

The protein belongs to the heat-stable enterotoxin family.

The protein localises to the secreted. In terms of biological role, toxin which activates the particulate form of guanylate cyclase and increases cyclic GMP levels within the host intestinal epithelial cells. This Escherichia coli protein is Heat-stable enterotoxin A3/A4 (sta3).